Here is a 146-residue protein sequence, read N- to C-terminus: Putative pre-16S rRNA nuclease (146 aa).

It belongs to the YqgF nuclease family.

The protein localises to the cytoplasm. In terms of biological role, could be a nuclease involved in processing of the 5'-end of pre-16S rRNA. This is Putative pre-16S rRNA nuclease from Pediococcus pentosaceus (strain ATCC 25745 / CCUG 21536 / LMG 10740 / 183-1w).